We begin with the raw amino-acid sequence, 116 residues long: Nitrogen regulatory PII-like protein (116 aa).

The protein belongs to the P(II) protein family. In terms of assembly, needs to interact with NrgA in order to localize correctly to the membrane.

It is found in the cell membrane. Its function is as follows. Required for full induction of the nrgAB operon under conditions of ammonium limitation. The protein is Nitrogen regulatory PII-like protein (nrgB) of Bacillus subtilis (strain 168).